Reading from the N-terminus, the 486-residue chain is 6-phosphogluconate dehydrogenase, decarboxylating 2 (486 aa).

NADP(+) is bound by residues 12–17 (GLAVMG), 35–37 (NRT), 79–81 (VKA), and Asn107. Substrate-binding positions include Asn107 and 133–135 (SGG). Lys188 serves as the catalytic Proton acceptor. Position 191–192 (191–192 (HN)) interacts with substrate. Glu195 (proton donor) is an active-site residue. Substrate is bound by residues Tyr196, Lys266, Arg293, Arg456, and His462. The Microbody targeting signal signature appears at 484–486 (SKI).

It belongs to the 6-phosphogluconate dehydrogenase family. Forms homodimer. Forms heterodimers with PGD1 or PGD3.

It localises to the cytoplasm. It is found in the cytosol. The protein resides in the peroxisome. The catalysed reaction is 6-phospho-D-gluconate + NADP(+) = D-ribulose 5-phosphate + CO2 + NADPH. It participates in carbohydrate degradation; pentose phosphate pathway; D-ribulose 5-phosphate from D-glucose 6-phosphate (oxidative stage): step 3/3. In terms of biological role, catalyzes the oxidative decarboxylation of 6-phosphogluconate to ribulose 5-phosphate and CO(2), with concomitant reduction of NADP to NADPH. Required for guided growth of the male gametophytes and interaction between the pollen tube and the ovule. In Arabidopsis thaliana (Mouse-ear cress), this protein is 6-phosphogluconate dehydrogenase, decarboxylating 2.